We begin with the raw amino-acid sequence, 104 residues long: Urease subunit gamma (104 aa).

The protein belongs to the urease gamma subunit family. In terms of assembly, heterotrimer of UreA (gamma), UreB (beta) and UreC (alpha) subunits. Three heterotrimers associate to form the active enzyme.

Its subcellular location is the cytoplasm. It catalyses the reaction urea + 2 H2O + H(+) = hydrogencarbonate + 2 NH4(+). It functions in the pathway nitrogen metabolism; urea degradation; CO(2) and NH(3) from urea (urease route): step 1/1. This is Urease subunit gamma from Actinomyces naeslundii.